Consider the following 121-residue polypeptide: Basic phospholipase A2 BmjeTX-I (121 aa).

7 disulfide bridges follow: Cys26-Cys114, Cys28-Cys45, Cys44-Cys95, Cys50-Cys121, Cys51-Cys88, Cys58-Cys82, and Cys76-Cys86. Tyr27, Gly29, and Gly31 together coordinate Ca(2+). Residue His48 is part of the active site. Ca(2+) is bound at residue Asp49. The active site involves Asp89.

The cofactor is Ca(2+). Expressed by the venom gland.

The protein localises to the secreted. The catalysed reaction is a 1,2-diacyl-sn-glycero-3-phosphocholine + H2O = a 1-acyl-sn-glycero-3-phosphocholine + a fatty acid + H(+). Snake venom phospholipase A2 (PLA2) that induces a slight blockade of neuromuscular contraction in an indirectly stimulated chick biventer cervicis nerve-muscle preparation. Does not inhibit contraction of chick biventer cervicic nerve-muscle preparation in response to treatment with acetylcholine or KCl. The neuromuscular blockade is mediated by inhibitory action at the presynaptic motor nerve endings. Lyses skeletal myoblasts and myotubes in vitro, and intramuscular injection causes local muscle necrosis. Induces edema in the mouse foot pad. Induces a transient increase of IL-6 levels. PLA2 catalyzes the calcium-dependent hydrolysis of the 2-acyl groups in 3-sn-phosphoglycerides. The protein is Basic phospholipase A2 BmjeTX-I of Bothrops marajoensis (Marajo lancehead).